Here is a 355-residue protein sequence, read N- to C-terminus: Chorismate synthase (355 aa).

Arg-48 contacts NADP(+). FMN is bound by residues 125 to 127 (RSS), 238 to 239 (NA), Gly-278, 293 to 297 (KPASS), and Arg-319.

It belongs to the chorismate synthase family. In terms of assembly, homotetramer. It depends on FMNH2 as a cofactor.

The catalysed reaction is 5-O-(1-carboxyvinyl)-3-phosphoshikimate = chorismate + phosphate. It participates in metabolic intermediate biosynthesis; chorismate biosynthesis; chorismate from D-erythrose 4-phosphate and phosphoenolpyruvate: step 7/7. Catalyzes the anti-1,4-elimination of the C-3 phosphate and the C-6 proR hydrogen from 5-enolpyruvylshikimate-3-phosphate (EPSP) to yield chorismate, which is the branch point compound that serves as the starting substrate for the three terminal pathways of aromatic amino acid biosynthesis. This reaction introduces a second double bond into the aromatic ring system. The polypeptide is Chorismate synthase (Baumannia cicadellinicola subsp. Homalodisca coagulata).